A 259-amino-acid chain; its full sequence is Zinc import ATP-binding protein ZnuC (259 aa).

Residues 22–238 (VEARGLTVRR…PEYRALFGAH (217 aa)) form the ABC transporter domain. An ATP-binding site is contributed by 54–61 (GPNGSGKS).

It belongs to the ABC transporter superfamily. Zinc importer (TC 3.A.1.15.5) family. As to quaternary structure, the complex is composed of two ATP-binding proteins (ZnuC), two transmembrane proteins (ZnuB) and a solute-binding protein (ZnuA).

The protein resides in the cell inner membrane. It carries out the reaction Zn(2+)(out) + ATP(in) + H2O(in) = Zn(2+)(in) + ADP(in) + phosphate(in) + H(+)(in). Functionally, part of the ABC transporter complex ZnuABC involved in zinc import. Responsible for energy coupling to the transport system. The chain is Zinc import ATP-binding protein ZnuC from Alkalilimnicola ehrlichii (strain ATCC BAA-1101 / DSM 17681 / MLHE-1).